A 177-amino-acid chain; its full sequence is Peptide methionine sulfoxide reductase MsrA (177 aa).

Cys15 is a catalytic residue.

Belongs to the MsrA Met sulfoxide reductase family.

The enzyme catalyses L-methionyl-[protein] + [thioredoxin]-disulfide + H2O = L-methionyl-(S)-S-oxide-[protein] + [thioredoxin]-dithiol. The catalysed reaction is [thioredoxin]-disulfide + L-methionine + H2O = L-methionine (S)-S-oxide + [thioredoxin]-dithiol. In terms of biological role, has an important function as a repair enzyme for proteins that have been inactivated by oxidation. Catalyzes the reversible oxidation-reduction of methionine sulfoxide in proteins to methionine. The chain is Peptide methionine sulfoxide reductase MsrA from Mycobacterium leprae (strain Br4923).